A 493-amino-acid chain; its full sequence is Glutamyl-tRNA(Gln) amidotransferase subunit A (493 aa).

Catalysis depends on charge relay system residues lysine 78 and serine 159. The Acyl-ester intermediate role is filled by serine 183.

This sequence belongs to the amidase family. GatA subfamily. In terms of assembly, heterotrimer of A, B and C subunits.

It catalyses the reaction L-glutamyl-tRNA(Gln) + L-glutamine + ATP + H2O = L-glutaminyl-tRNA(Gln) + L-glutamate + ADP + phosphate + H(+). Functionally, allows the formation of correctly charged Gln-tRNA(Gln) through the transamidation of misacylated Glu-tRNA(Gln) in organisms which lack glutaminyl-tRNA synthetase. The reaction takes place in the presence of glutamine and ATP through an activated gamma-phospho-Glu-tRNA(Gln). In Sphingopyxis alaskensis (strain DSM 13593 / LMG 18877 / RB2256) (Sphingomonas alaskensis), this protein is Glutamyl-tRNA(Gln) amidotransferase subunit A.